Here is a 538-residue protein sequence, read N- to C-terminus: Putative cysteine ligase BshC (538 aa).

Belongs to the BshC family.

Its function is as follows. Involved in bacillithiol (BSH) biosynthesis. May catalyze the last step of the pathway, the addition of cysteine to glucosamine malate (GlcN-Mal) to generate BSH. This Halalkalibacterium halodurans (strain ATCC BAA-125 / DSM 18197 / FERM 7344 / JCM 9153 / C-125) (Bacillus halodurans) protein is Putative cysteine ligase BshC.